A 117-amino-acid polypeptide reads, in one-letter code: MPLYEHVMIARQDLSNTQAEGLIEHFGAVLSDNGGSLVDHEYWGVKTMAYKINKNRKGHYAFLRTDAPASAVQEMERLMRLHDDVMRVLTIKVDEHAEGPSVQMQKRDERDSRRERR.

Residues 96–117 (HAEGPSVQMQKRDERDSRRERR) are disordered. Residues 105–117 (QKRDERDSRRERR) are compositionally biased toward basic and acidic residues.

It belongs to the bacterial ribosomal protein bS6 family.

In terms of biological role, binds together with bS18 to 16S ribosomal RNA. This is Small ribosomal subunit protein bS6 from Ruegeria pomeroyi (strain ATCC 700808 / DSM 15171 / DSS-3) (Silicibacter pomeroyi).